The primary structure comprises 349 residues: Protein RecA (349 aa).

65 to 72 (GPESSGKT) is a binding site for ATP.

This sequence belongs to the RecA family.

The protein resides in the cytoplasm. Can catalyze the hydrolysis of ATP in the presence of single-stranded DNA, the ATP-dependent uptake of single-stranded DNA by duplex DNA, and the ATP-dependent hybridization of homologous single-stranded DNAs. It interacts with LexA causing its activation and leading to its autocatalytic cleavage. The polypeptide is Protein RecA (Enterococcus faecium (Streptococcus faecium)).